The chain runs to 665 residues: Coiled-coil domain-containing protein 138 (665 aa).

Thr-48 carries the phosphothreonine modification. Phosphoserine is present on Ser-49. Positions Gln-198–Lys-323 form a coiled coil. Ser-469 carries the post-translational modification Phosphoserine.

The protein is Coiled-coil domain-containing protein 138 (CCDC138) of Homo sapiens (Human).